Consider the following 88-residue polypeptide: Large ribosomal subunit protein bL31B (88 aa).

Belongs to the bacterial ribosomal protein bL31 family. Type B subfamily. In terms of assembly, part of the 50S ribosomal subunit.

The polypeptide is Large ribosomal subunit protein bL31B (Glaesserella parasuis serovar 5 (strain SH0165) (Haemophilus parasuis)).